Reading from the N-terminus, the 642-residue chain is Threonine--tRNA ligase (642 aa).

The region spanning 1-63 is the TGS domain; it reads MNDITVTLPD…YNDARVVIVT (63 aa). The catalytic stretch occupies residues 242–533; it reads DHRKIGQELD…LIEHFNGKFP (292 aa). Cys334, His385, and His510 together coordinate Zn(2+).

This sequence belongs to the class-II aminoacyl-tRNA synthetase family. Homodimer. Requires Zn(2+) as cofactor.

It is found in the cytoplasm. It carries out the reaction tRNA(Thr) + L-threonine + ATP = L-threonyl-tRNA(Thr) + AMP + diphosphate + H(+). Functionally, catalyzes the attachment of threonine to tRNA(Thr) in a two-step reaction: L-threonine is first activated by ATP to form Thr-AMP and then transferred to the acceptor end of tRNA(Thr). The polypeptide is Threonine--tRNA ligase (Haloquadratum walsbyi (strain DSM 16790 / HBSQ001)).